The chain runs to 87 residues: Acylphosphatase (87 aa).

In terms of domain architecture, Acylphosphatase-like spans 2–87 (RLTALVSGHV…ETGLREFHIY (86 aa)). Catalysis depends on residues Arg-17 and Asn-35.

This sequence belongs to the acylphosphatase family.

The catalysed reaction is an acyl phosphate + H2O = a carboxylate + phosphate + H(+). In Deinococcus radiodurans (strain ATCC 13939 / DSM 20539 / JCM 16871 / CCUG 27074 / LMG 4051 / NBRC 15346 / NCIMB 9279 / VKM B-1422 / R1), this protein is Acylphosphatase (acyP).